The chain runs to 169 residues: Cell division inhibitor SulA (169 aa).

The ftsZ binding stretch occupies residues 106–112 (ALRTGNY). The lon protease binding stretch occupies residues 162–169 (KIHSNLYH).

It belongs to the SulA family. Interacts with FtsZ. In terms of processing, is rapidly cleaved and degraded by the Lon protease once DNA damage is repaired.

Component of the SOS system and an inhibitor of cell division. Accumulation of SulA causes rapid cessation of cell division and the appearance of long, non-septate filaments. In the presence of GTP, binds a polymerization-competent form of FtsZ in a 1:1 ratio, thus inhibiting FtsZ polymerization and therefore preventing it from participating in the assembly of the Z ring. This mechanism prevents the premature segregation of damaged DNA to daughter cells during cell division. This chain is Cell division inhibitor SulA, found in Salmonella arizonae (strain ATCC BAA-731 / CDC346-86 / RSK2980).